The chain runs to 185 residues: uncharacterized protein (185 aa).

This sequence belongs to the PIGL family.

This is an uncharacterized protein from Escherichia coli (strain K12).